A 533-amino-acid chain; its full sequence is Hydroxylamine reductase (533 aa).

Residues Cys3, Cys6, Cys15, and Cys21 each coordinate [4Fe-4S] cluster. Residues His234, Glu258, Cys302, Cys389, Cys417, Cys442, Glu476, and Lys478 each coordinate hybrid [4Fe-2O-2S] cluster. Cys389 is subject to Cysteine persulfide.

The protein belongs to the HCP family. The cofactor is [4Fe-4S] cluster. It depends on hybrid [4Fe-2O-2S] cluster as a cofactor.

The protein resides in the cytoplasm. It catalyses the reaction A + NH4(+) + H2O = hydroxylamine + AH2 + H(+). Catalyzes the reduction of hydroxylamine to form NH(3) and H(2)O. The chain is Hydroxylamine reductase from Maridesulfovibrio salexigens (strain ATCC 14822 / DSM 2638 / NCIMB 8403 / VKM B-1763) (Desulfovibrio salexigens).